The sequence spans 321 residues: Geranylgeranyl transferase type-2 subunit beta 1 (321 aa).

N-acetylserine is present on serine 2. PFTB repeat units follow at residues 14–55 (ADKH…DLLD), 62–103 (EEEV…ALFD), 110–151 (IGKV…SILK), 158–199 (VEKA…AITG), 206–247 (KDSL…IMID), and 254–296 (KAKL…SLLE). Geranylgeranyl diphosphate-binding positions include 184-186 (HAG) and 226-229 (RPEK). Zn(2+) is bound by residues aspartate 232 and cysteine 234. 235–238 (YSWW) is a binding site for geranylgeranyl diphosphate. A Zn(2+)-binding site is contributed by histidine 284.

It belongs to the protein prenyltransferase subunit beta family. In terms of assembly, heterotrimer composed of the alpha subunit RGTA, the beta subunit RGTB and REP; within this trimer, RGTA and RGTB form the catalytic component, while REP mediates peptide substrate binding. Requires Zn(2+) as cofactor. The cofactor is Mg(2+).

It carries out the reaction geranylgeranyl diphosphate + L-cysteinyl-[protein] = S-geranylgeranyl-L-cysteinyl-[protein] + diphosphate. With respect to regulation, the enzymatic reaction requires the aid of the Rab escort protein REP. Functionally, catalyzes the transfer of a geranylgeranyl moiety from geranylgeranyl diphosphate to both cysteines of Rab proteins with the C-terminal sequence -CCXX, CXXX, -XCCX and -XCXC, such as RABA1A, RABA2A, RABF2A and RABG2. Involved in the geranylgeranylation of RABA2A. In vitro, can prenylate PGGTI targets with the C-terminal sequence Cys-aliphatic-aliphatic-X (CaaX) with leucine in the terminal position. Substrates with the C-terminal sequence -CSIL such as ARAC11/ROP1 or GG2/AGG2 are prenylated independently of REP and when the beta subunit is associated with the alpha subunit RGTA1. Required for male fertility and root tip growth. This chain is Geranylgeranyl transferase type-2 subunit beta 1, found in Arabidopsis thaliana (Mouse-ear cress).